A 235-amino-acid polypeptide reads, in one-letter code: Phosphoribosylaminoimidazole-succinocarboxamide synthase (235 aa).

It belongs to the SAICAR synthetase family.

It catalyses the reaction 5-amino-1-(5-phospho-D-ribosyl)imidazole-4-carboxylate + L-aspartate + ATP = (2S)-2-[5-amino-1-(5-phospho-beta-D-ribosyl)imidazole-4-carboxamido]succinate + ADP + phosphate + 2 H(+). Its pathway is purine metabolism; IMP biosynthesis via de novo pathway; 5-amino-1-(5-phospho-D-ribosyl)imidazole-4-carboxamide from 5-amino-1-(5-phospho-D-ribosyl)imidazole-4-carboxylate: step 1/2. This is Phosphoribosylaminoimidazole-succinocarboxamide synthase from Streptococcus agalactiae serotype Ia (strain ATCC 27591 / A909 / CDC SS700).